The following is a 204-amino-acid chain: MPKFFCDYCDVYLTHDSMSVRKAHNSGRNHLRNVVDYYQQIGHEKAQSVIDSITSSYAAEGQAHANPMLPQNQPGQGFPPPPFGFPGGIPPPFPGMPGAPPGQFPQGMPPPPGGGRGMPPMPPFPPGPNGMPVPPNGLPFPPPGGFPFPPPGAPGAPGAPGASGGAPPPFPGLPGMPPPGQGFPPGGPPGFAPPGAGAPGHEKR.

The Matrin-type zinc finger occupies 4 to 36 (FFCDYCDVYLTHDSMSVRKAHNSGRNHLRNVVD). The disordered stretch occupies residues 65–204 (ANPMLPQNQP…GAGAPGHEKR (140 aa)). Pro residues-rich tracts occupy residues 77 to 154 (GFPP…PGAP) and 166 to 192 (APPP…PGFA).

Belongs to the U1 small nuclear ribonucleoprotein C family. In terms of assembly, U1 snRNP is composed of the 7 core Sm proteins B/B', D1, D2, D3, E, F and G that assemble in a heptameric protein ring on the Sm site of the small nuclear RNA to form the core snRNP, and at least 3 U1 snRNP-specific proteins U1-70K, U1-A and U1-C. U1-C interacts with U1 snRNA and the 5' splice-site region of the pre-mRNA.

Its subcellular location is the nucleus. Component of the spliceosomal U1 snRNP, which is essential for recognition of the pre-mRNA 5' splice-site and the subsequent assembly of the spliceosome. U1-C is directly involved in initial 5' splice-site recognition for both constitutive and regulated alternative splicing. The interaction with the 5' splice-site seems to precede base-pairing between the pre-mRNA and the U1 snRNA. Stimulates commitment or early (E) complex formation by stabilizing the base pairing of the 5' end of the U1 snRNA and the 5' splice-site region. The chain is U1 small nuclear ribonucleoprotein C from Fusarium vanettenii (strain ATCC MYA-4622 / CBS 123669 / FGSC 9596 / NRRL 45880 / 77-13-4) (Fusarium solani subsp. pisi).